Reading from the N-terminus, the 74-residue chain is Ubiquitin-like protein FUBI (74 aa).

This sequence belongs to the ubiquitin family.

Functionally, confers arsenite resistance. The protein is Ubiquitin-like protein FUBI (FAU) of Cricetulus griseus (Chinese hamster).